The chain runs to 435 residues: D-inositol 3-phosphate glycosyltransferase (435 aa).

Residue histidine 16 coordinates 1D-myo-inositol 3-phosphate. UDP-N-acetyl-alpha-D-glucosamine contacts are provided by residues 22–23 (QP) and glycine 30. 1D-myo-inositol 3-phosphate-binding positions include 27–32 (DAGGMN), lysine 85, tyrosine 118, threonine 142, and arginine 162. UDP-N-acetyl-alpha-D-glucosamine is bound by residues arginine 237, lysine 242, and valine 303. Mg(2+)-binding residues include tyrosine 312, arginine 313, and alanine 315. UDP-N-acetyl-alpha-D-glucosamine is bound by residues glutamate 325 and glutamate 333. Threonine 339 provides a ligand contact to Mg(2+).

The protein belongs to the glycosyltransferase group 1 family. MshA subfamily. Homodimer.

The catalysed reaction is 1D-myo-inositol 3-phosphate + UDP-N-acetyl-alpha-D-glucosamine = 1D-myo-inositol 2-acetamido-2-deoxy-alpha-D-glucopyranoside 3-phosphate + UDP + H(+). Its function is as follows. Catalyzes the transfer of a N-acetyl-glucosamine moiety to 1D-myo-inositol 3-phosphate to produce 1D-myo-inositol 2-acetamido-2-deoxy-glucopyranoside 3-phosphate in the mycothiol biosynthesis pathway. This is D-inositol 3-phosphate glycosyltransferase from Kineococcus radiotolerans (strain ATCC BAA-149 / DSM 14245 / SRS30216).